The primary structure comprises 177 residues: NADH-quinone oxidoreductase subunit B (177 aa).

Cys-53, Cys-54, Cys-118, and Cys-148 together coordinate [4Fe-4S] cluster.

The protein belongs to the complex I 20 kDa subunit family. In terms of assembly, NDH-1 is composed of 14 different subunits. Subunits NuoB, C, D, E, F, and G constitute the peripheral sector of the complex. [4Fe-4S] cluster is required as a cofactor.

It is found in the cell membrane. It carries out the reaction a quinone + NADH + 5 H(+)(in) = a quinol + NAD(+) + 4 H(+)(out). NDH-1 shuttles electrons from NADH, via FMN and iron-sulfur (Fe-S) centers, to quinones in the respiratory chain. The immediate electron acceptor for the enzyme in this species is believed to be a menaquinone. Couples the redox reaction to proton translocation (for every two electrons transferred, four hydrogen ions are translocated across the cytoplasmic membrane), and thus conserves the redox energy in a proton gradient. This Anoxybacillus flavithermus (strain DSM 21510 / WK1) protein is NADH-quinone oxidoreductase subunit B.